A 222-amino-acid polypeptide reads, in one-letter code: Large ribosomal subunit protein mL64 (222 aa).

2 disordered regions span residues 19–46 and 188–222; these read APGS…EDLL and KRLK…APSS. A compositionally biased stretch (basic residues) spans 25–36; sequence YRARPPPRRRPG. A coiled-coil region spans residues 99–212; sequence MQESLRVKQL…AAALAAAVAQ (114 aa). Positions 184-200 match the Nuclear localization signal motif; it reads KKERKRLKEEKQKRKKE. Low complexity predominate over residues 203–212; the sequence is AAALAAAVAQ.

This sequence belongs to the mitochondrion-specific ribosomal protein mL64 family. As to quaternary structure, component of the mitochondrial large ribosomal subunit (mt-LSU). Mature mammalian 55S mitochondrial ribosomes consist of a small (28S) and a large (39S) subunit. The 28S small subunit contains a 12S ribosomal RNA (12S mt-rRNA) and 30 different proteins. The 39S large subunit contains a 16S rRNA (16S mt-rRNA), a copy of mitochondrial valine transfer RNA (mt-tRNA(Val)), which plays an integral structural role, and 52 different proteins. Interacts with GADD45A, GADD45B and GADD45G. Interacts with NR4A1 via the NR4A1 AB domain. Interacts with ATAD3A and ATAD3B. In terms of assembly, (Microbial infection) Interacts with the human papilloma virus type 16 (HPV 16) minor capsid protein L2. In terms of tissue distribution, widely expressed. Highly expressed in the thyroid gland, heart, lymph nodes, trachea and adrenal tissues. Expressed at lower level in liver skeletal muscle, kidney, pancreas, testis, ovary and stomach. Barely detectable in adrenal adenoma and papillary thyroid cancer.

The protein resides in the mitochondrion. It localises to the nucleus. Functionally, acts as a negative regulator of G1 to S cell cycle phase progression by inhibiting cyclin-dependent kinases. Inhibitory effects are additive with GADD45 proteins but also occur in the absence of GADD45 proteins. Acts as a repressor of the orphan nuclear receptor NR4A1 by inhibiting AB domain-mediated transcriptional activity. May be involved in the hormone-mediated regulation of NR4A1 transcriptional activity. May play a role in mitochondrial protein synthesis. This Homo sapiens (Human) protein is Large ribosomal subunit protein mL64 (GADD45GIP1).